A 484-amino-acid polypeptide reads, in one-letter code: Membrane-bound lytic murein transglycosylase F (484 aa).

Positions 1–18 (MKGLLLRIIAAFALVLWA) are cleaved as a signal peptide. Positions 19–267 (IDMVFPWQQM…RIEEKYFNHF (249 aa)) are non-LT domain. Residues 268 to 484 (SQFDYVDMRQ…PLTDNQEKQE (217 aa)) are LT domain. The active site involves E312. The tract at residues 459-484 (ADNKDKPSETDENLPLPLTDNQEKQE) is disordered.

In the N-terminal section; belongs to the bacterial solute-binding protein 3 family. The protein in the C-terminal section; belongs to the transglycosylase Slt family.

The protein resides in the cell outer membrane. It carries out the reaction Exolytic cleavage of the (1-&gt;4)-beta-glycosidic linkage between N-acetylmuramic acid (MurNAc) and N-acetylglucosamine (GlcNAc) residues in peptidoglycan, from either the reducing or the non-reducing ends of the peptidoglycan chains, with concomitant formation of a 1,6-anhydrobond in the MurNAc residue.. In terms of biological role, murein-degrading enzyme that degrades murein glycan strands and insoluble, high-molecular weight murein sacculi, with the concomitant formation of a 1,6-anhydromuramoyl product. Lytic transglycosylases (LTs) play an integral role in the metabolism of the peptidoglycan (PG) sacculus. Their lytic action creates space within the PG sacculus to allow for its expansion as well as for the insertion of various structures such as secretion systems and flagella. The chain is Membrane-bound lytic murein transglycosylase F from Mannheimia succiniciproducens (strain KCTC 0769BP / MBEL55E).